Reading from the N-terminus, the 612-residue chain is U-box domain-containing protein 11 (612 aa).

Residues 127-196 (DEVGEQVELA…LHFGEEEEKQ (70 aa)) are a coiled coil. The 75-residue stretch at 240–314 (TIPVDFLCPV…SRWCAEHNIE (75 aa)) folds into the U-box domain. ARM repeat units lie at residues 363–402 (TDNR…NLSI), 404–443 (ENNK…SLSL), 445–484 (DENK…NLCI), 486–526 (HGNK…VLAN), and 528–567 (QDAK…SLCK).

The catalysed reaction is S-ubiquitinyl-[E2 ubiquitin-conjugating enzyme]-L-cysteine + [acceptor protein]-L-lysine = [E2 ubiquitin-conjugating enzyme]-L-cysteine + N(6)-ubiquitinyl-[acceptor protein]-L-lysine.. It functions in the pathway protein modification; protein ubiquitination. Its function is as follows. Functions as an E3 ubiquitin ligase. In Arabidopsis thaliana (Mouse-ear cress), this protein is U-box domain-containing protein 11 (PUB11).